Here is a 243-residue protein sequence, read N- to C-terminus: Small ribosomal subunit protein uS3 (243 aa).

The region spanning 39-107 (IRAYLIKELK…ETHLNIVEVR (69 aa)) is the KH type-2 domain. The tract at residues 214–243 (ASERRGLEGDAQGPASRERGDRPDRRRENA) is disordered. Positions 229–243 (SRERGDRPDRRRENA) are enriched in basic and acidic residues.

The protein belongs to the universal ribosomal protein uS3 family. In terms of assembly, part of the 30S ribosomal subunit. Forms a tight complex with proteins S10 and S14.

In terms of biological role, binds the lower part of the 30S subunit head. Binds mRNA in the 70S ribosome, positioning it for translation. This is Small ribosomal subunit protein uS3 from Agrobacterium fabrum (strain C58 / ATCC 33970) (Agrobacterium tumefaciens (strain C58)).